A 770-amino-acid polypeptide reads, in one-letter code: Coiled-coil alpha-helical rod protein 1 (770 aa).

3 coiled-coil regions span residues 56 to 289 (STVT…DLQA), 334 to 420 (LRNW…RQEQ), and 476 to 669 (GLMA…RKEE). Disordered regions lie at residues 573 to 592 (LEAARRGQQESTEEAASLRQ), 641 to 672 (LRQIQHKATQEKERNQELRRLQDEARKEEGQR), 700 to 721 (NKKCSPRSVESSSSESPAAASC), and 744 to 770 (SRDEDICVEDNQNTKKTKNPPSDPLLS). A compositionally biased stretch (basic and acidic residues) spans 648–672 (ATQEKERNQELRRLQDEARKEEGQR). Low complexity predominate over residues 701-721 (KKCSPRSVESSSSESPAAASC).

It localises to the cytoplasm. The protein localises to the nucleus. May be a regulator of keratinocyte proliferation or differentiation. In Mus musculus (Mouse), this protein is Coiled-coil alpha-helical rod protein 1 (Cchcr1).